Reading from the N-terminus, the 227-residue chain is MEALKKLAGVTAAQYVTDGMTIGLGTGSTAYYFVEEIGRRIKEEGLQVVGVTTSSVTTKQAEGLGIPLTSIDDIDCIDLTVDGADEVDKAFNGIKGGGAALLMEKIVATPTKEYIWVVDESKLVDHLGAFKLPVEVVQYGADRLFRVFERAGYKPSFRMKGDKRLITDMQNFIIDLDLGCIENPFDFGRLLDQTVGVVEHGLFNGMVDKVIVAGQAGVTVLEANQST.

Substrate-binding positions include 26–29 (TGST), 82–85 (DGAD), and 95–98 (KGGG). The active-site Proton acceptor is Glu104. Residue Lys122 participates in substrate binding.

The protein belongs to the ribose 5-phosphate isomerase family. As to quaternary structure, homodimer.

The catalysed reaction is aldehydo-D-ribose 5-phosphate = D-ribulose 5-phosphate. Its pathway is carbohydrate degradation; pentose phosphate pathway; D-ribose 5-phosphate from D-ribulose 5-phosphate (non-oxidative stage): step 1/1. In terms of biological role, catalyzes the reversible conversion of ribose-5-phosphate to ribulose 5-phosphate. This is Ribose-5-phosphate isomerase A from Streptococcus equi subsp. zooepidemicus (strain H70).